A 658-amino-acid chain; its full sequence is ATP-dependent RNA helicase MRH4, mitochondrial (658 aa).

The N-terminal 32 residues, 1 to 32 (MLRQVTRACPFCEVRSLLGQAPRSLQPQTRLY), are a transit peptide targeting the mitochondrion. Residues 25 to 37 (LQPQTRLYTQVQR) show a composition bias toward polar residues. Residues 25 to 150 (LQPQTRLYTQ…RNDDGKRRTR (126 aa)) form a disordered region. The segment covering 125–150 (LERERERRESHFERPKRNDDGKRRTR) has biased composition (basic and acidic residues). A Q motif motif is present at residues 182–214 (DSFDKMPLLDTVQAAIKDALPALEYRSPTPAQS). Residues 233-449 (STKKGGPEAF…ADRFPDMNRL (217 aa)) enclose the Helicase ATP-binding domain. 246-253 (AETGSGKT) contributes to the ATP binding site. The tract at residues 268 to 292 (EQQEKEDAEAQAQKDADEAAAKAQD) is disordered. Basic and acidic residues predominate over residues 279-292 (AQKDADEAAAKAQD). Positions 396-399 (DEAD) match the DEAD box motif. The region spanning 490 to 658 (RSTGEYDPAE…EAMYRGEALI (169 aa)) is the Helicase C-terminal domain. Over residues 552–562 (FTGSDTSTAIK) the composition is skewed to polar residues. The disordered stretch occupies residues 552–573 (FTGSDTSTAIKSSPDAPPKPEL).

The protein belongs to the DEAD box helicase family. MRH4 subfamily.

The protein resides in the mitochondrion. It catalyses the reaction ATP + H2O = ADP + phosphate + H(+). In terms of biological role, ATP-binding RNA helicase involved in mitochondrial RNA metabolism. Required for maintenance of mitochondrial DNA. This is ATP-dependent RNA helicase MRH4, mitochondrial (MRH4) from Phaeosphaeria nodorum (strain SN15 / ATCC MYA-4574 / FGSC 10173) (Glume blotch fungus).